The chain runs to 217 residues: Somatotropin (217 aa).

The signal sequence occupies residues 1 to 26 (MAAGSRTSLLLAFALLCLPWLQEGSA). Residue H44 coordinates Zn(2+). C79 and C191 form a disulfide bridge. S132 is subject to Phosphoserine. E200 contacts Zn(2+). C208 and C215 are oxidised to a cystine.

Belongs to the somatotropin/prolactin family.

The protein localises to the secreted. In terms of biological role, plays an important role in growth control. Its major role in stimulating body growth is to stimulate the liver and other tissues to secrete IGF1. It stimulates both the differentiation and proliferation of myoblasts. It also stimulates amino acid uptake and protein synthesis in muscle and other tissues. The chain is Somatotropin (GH1) from Macaca mulatta (Rhesus macaque).